Reading from the N-terminus, the 43-residue chain is Protein PsbN (43 aa).

The helical transmembrane segment at 5 to 27 (TLVTISISCLLVSFTGYALYTAF) threads the bilayer.

Belongs to the PsbN family.

The protein resides in the plastid. It is found in the chloroplast thylakoid membrane. May play a role in photosystem I and II biogenesis. The chain is Protein PsbN from Pinus koraiensis (Korean pine).